The chain runs to 171 residues: UPF0725 protein At3g25080 (171 aa).

It belongs to the UPF0725 (EMB2204) family.

The protein is UPF0725 protein At3g25080 of Arabidopsis thaliana (Mouse-ear cress).